The sequence spans 142 residues: Complexin (142 aa).

Disordered regions lie at residues 13–70 and 83–105; these read QLSA…MRQD and IVEA…PEEL. The stretch at 29 to 138 forms a coiled coil; that stretch reads GDDKEKAEEE…NELKTQIEGK (110 aa). The segment covering 31–70 has biased composition (basic and acidic residues); it reads DKEKAEEEERERQEAIKEAEDRRKEKHRKMEEEREKMRQD. At C139 the chain carries Cysteine methyl ester. The S-farnesyl cysteine moiety is linked to residue C139. Residues 140–142 constitute a propeptide, removed in mature form; that stretch reads VMQ.

It belongs to the complexin/synaphin family. Binds to the SNARE core complex containing Snap25, synaptobrevin and Syx1A.

The protein resides in the membrane. Functionally, positively regulates a late step in synaptic vesicle exocytosis. The chain is Complexin (cpx) from Drosophila melanogaster (Fruit fly).